We begin with the raw amino-acid sequence, 199 residues long: Probable cobalt-precorrin-6B C(15)-methyltransferase (decarboxylating) (199 aa).

S-adenosyl-L-methionine is bound by residues Thr-24, 48 to 52, Asp-72, and Ala-101; that span reads GCGTG.

This sequence belongs to the methyltransferase superfamily. Archaeal-type CbiT family.

The enzyme catalyses Co-precorrin-6B + S-adenosyl-L-methionine = Co-precorrin-7 + S-adenosyl-L-homocysteine + CO2. The protein operates within cofactor biosynthesis; adenosylcobalamin biosynthesis; cob(II)yrinate a,c-diamide from sirohydrochlorin (anaerobic route): step 8/10. Functionally, catalyzes the methylation of C-15 in cobalt-precorrin-6B followed by the decarboxylation of C-12 to form cobalt-precorrin-7. The protein is Probable cobalt-precorrin-6B C(15)-methyltransferase (decarboxylating) of Saccharolobus islandicus (strain Y.N.15.51 / Yellowstone #2) (Sulfolobus islandicus).